The sequence spans 555 residues: Urocanate hydratase (555 aa).

Residues 51 to 52 (GG), Gln-129, 175 to 177 (GMG), Glu-195, 241 to 242 (NA), 262 to 266 (QTSAH), 272 to 273 (YL), and Tyr-321 contribute to the NAD(+) site. The active site involves Cys-409. An NAD(+)-binding site is contributed by Gly-491.

It belongs to the urocanase family. Requires NAD(+) as cofactor.

Its subcellular location is the cytoplasm. It carries out the reaction 4-imidazolone-5-propanoate = trans-urocanate + H2O. The protein operates within amino-acid degradation; L-histidine degradation into L-glutamate; N-formimidoyl-L-glutamate from L-histidine: step 2/3. In terms of biological role, catalyzes the conversion of urocanate to 4-imidazolone-5-propionate. This Hyphomonas neptunium (strain ATCC 15444) protein is Urocanate hydratase.